A 201-amino-acid polypeptide reads, in one-letter code: Peptidyl-prolyl cis-trans isomerase FKBP11 (201 aa).

Residues 1-27 (MTLSPLLLPLQLLLLLLFSGAVCRAEA) form the signal peptide. Positions 57–144 (GDTLHIHYTG…QYDVELIALI (88 aa)) constitute a PPIase FKBP-type domain. Residues 156-176 (ILPLVGIAMVPALLGLIGYHL) form a helical membrane-spanning segment.

Belongs to the FKBP-type PPIase family. As to quaternary structure, interacts with IFITM5.

It localises to the membrane. It carries out the reaction [protein]-peptidylproline (omega=180) = [protein]-peptidylproline (omega=0). In terms of biological role, PPIases accelerate the folding of proteins during protein synthesis. This Mus musculus (Mouse) protein is Peptidyl-prolyl cis-trans isomerase FKBP11 (Fkbp11).